Here is a 2222-residue protein sequence, read N- to C-terminus: Voltage-dependent R-type calcium channel subunit alpha-1E (2222 aa).

Residues 1 to 40 are Cytoplasmic-facing; the sequence is MALYNPIPVRQNCFTVNRSLFIFGEDNIVRKYAKKLIDWP. The I repeat unit spans residues 27-305; the sequence is NIVRKYAKKL…LVLGVLSGEF (279 aa). Residues 41-59 form a helical membrane-spanning segment; the sequence is PFEYMILATIIANCIVLAL. Residues 60–78 lie on the Extracellular side of the membrane; sequence EQHLPEDDKTPMSRRLEKT. The helical transmembrane segment at 79-97 threads the bilayer; sequence EPYFIGIFCFEAGIKIVAL. Residues 98–109 lie on the Cytoplasmic side of the membrane; the sequence is GFIFHKGSYLRN. Residues 110-124 traverse the membrane as a helical segment; the sequence is GWNVMDFIVVLSGIL. The Extracellular segment spans residues 125 to 136; the sequence is ATAGTHFNTHVD. The helical transmembrane segment at 137 to 156 threads the bilayer; the sequence is LRTLRAVRVLRPLKLVSGIP. The Cytoplasmic portion of the chain corresponds to 157–174; the sequence is SLQIVLKSIMKAMVPLLQ. Residues 175-195 traverse the membrane as a helical segment; it reads IGLLLFFAILMFAIIGLEFYS. The Extracellular portion of the chain corresponds to 196 to 277; the sequence is GKLHRACFMN…NTNDALGATW (82 aa). A glycan (N-linked (GlcNAc...) asparagine) is linked at Asn205. Residues 278–301 form a helical membrane-spanning segment; it reads NWLYFIPLIIIGSFFVLNLVLGVL. The Cytoplasmic portion of the chain corresponds to 302-427; sequence SGEFAKERER…ISIRHMVKSQ (126 aa). The tract at residues 325-342 is binding to the beta subunit; sequence QQIERELNGYRAWIDKAE. Position 377 (Asp377) interacts with Ca(2+). A Phosphoserine modification is found at Ser378. Ca(2+) contacts are provided by Ser379, Glu381, and Cys383. A Phosphothreonine modification is found at Thr391. Residues 413 to 657 form an II repeat; the sequence is ERLLRISIRH…VFLAIAVDNL (245 aa). The chain crosses the membrane as a helical span at residues 428–447; it reads VFYWIVLSVVALNTACVAIV. At 448–460 the chain is on the extracellular side; the sequence is HHNQPQWLTHLLY. Residues 461 to 480 form a helical membrane-spanning segment; it reads YAEFLFLGLFLLEMSLKMYG. Residues 481-489 are Cytoplasmic-facing; sequence MGPRLYFHS. Residues 490 to 508 traverse the membrane as a helical segment; it reads SFNCFDFGVTVGSIFEVVW. Over 509–518 the chain is Extracellular; sequence AIFRPGTSFG. A helical transmembrane segment spans residues 519–537; it reads ISVLRALRLLRIFKITKYW. Over 538-556 the chain is Cytoplasmic; it reads ASLRNLVVSLMSSMKSIIS. A helical membrane pass occupies residues 557 to 576; the sequence is LLFLLFLFIVVFALLGMQLF. Residues 577–629 are Extracellular-facing; sequence GGRFNFNDGTPSANFDTFPAAIMTVFQILTGEDWNEVMYNGIRSQGGVSSGMW. Residues 630–654 form a helical membrane-spanning segment; it reads SAIYFIVLTLFGNYTLLNVFLAIAV. The Cytoplasmic portion of the chain corresponds to 655–1100; that stretch reads DNLANAQELT…TNPIRKACHY (446 aa). A disordered region spans residues 680–727; it reads LQKAKEVSPMSAPNMPSIERDRRRRHHMSMWEPRSSHLRERRRRHHMS. Ser687, Ser696, Ser744, Ser766, and Ser806 each carry phosphoserine. Disordered stretches follow at residues 820-944 and 1042-1076; these read NQRS…VPRG and NKTDGEASPLKEAETKEEEEEVEKKKQKKEKRETG. Residues 864-877 are compositionally biased toward basic residues; the sequence is RHRQSQRRSRHRRV. Low complexity predominate over residues 884–896; sequence SASASRSRSASQE. Ser898 is subject to Phosphoserine. 2 stretches are compositionally biased toward basic and acidic residues: residues 906–935 and 1044–1055; these read DGEKEHEPQSSHRSKEPTIHEEERTQDLRR and TDGEASPLKEAE. Residue Ser1049 is modified to Phosphoserine. One copy of the III repeat lies at 1092 to 1378; it reads NPIRKACHYI…IFVALIIITF (287 aa). The helical transmembrane segment at 1101 to 1117 threads the bilayer; the sequence is IVNLRYFEMCILLVIAA. The Extracellular portion of the chain corresponds to 1118–1141; the sequence is SSIALAAEDPVLTNSERNKVLRYF. Residues 1142–1161 form a helical membrane-spanning segment; it reads DYVFTGVFTFEMVIKMIDQG. Residues 1162–1169 lie on the Cytoplasmic side of the membrane; sequence LILQDGSY. The chain crosses the membrane as a helical span at residues 1170 to 1192; that stretch reads FRDLWNILDFVVVVGALVAFALA. Topologically, residues 1193-1206 are extracellular; sequence NALGTNKGRDIKTI. A helical transmembrane segment spans residues 1207–1224; sequence KSLRVLRVLRPLKTIKRL. Residues 1225–1243 are Cytoplasmic-facing; it reads PKLKAVFDCVVTSLKNVFN. Residues 1244 to 1263 traverse the membrane as a helical segment; the sequence is ILIVYKLFMFIFAVIAVQLF. Over 1264–1350 the chain is Extracellular; the sequence is KGKFFYCTDS…RGPSRSNRME (87 aa). Residues 1351-1374 form a helical membrane-spanning segment; sequence MSIFYVVYFVVFPFFFVNIFVALI. The Cytoplasmic segment spans residues 1375-1431; it reads IITFQEQGDKMMEECSLEKNERACIDFAISAKPLTRYMPQNRHTFQYRVWHFVVSPS. The stretch at 1415–1678 is one IV repeat; sequence NRHTFQYRVW…LFVAVIMDNF (264 aa). Residues 1432–1450 traverse the membrane as a helical segment; sequence FEYTIMAMIALNTVVLMMK. The Extracellular segment spans residues 1451-1467; the sequence is YYSAPWTYELALKYLNI. The helical transmembrane segment at 1468-1485 threads the bilayer; that stretch reads AFTMVFSLECVLKVIAFG. The Cytoplasmic portion of the chain corresponds to 1486–1493; it reads FLNYFRDT. Residues 1494–1512 traverse the membrane as a helical segment; sequence WNIFDFITVIGSITEIILT. Topologically, residues 1513–1523 are extracellular; sequence DSKLVNTSGFN. 2 N-linked (GlcNAc...) asparagine glycosylation sites follow: Asn1518 and Asn1523. A helical transmembrane segment spans residues 1524–1542; the sequence is MSFLKLFRAARLIKLLRQG. Residues 1543-1561 are Cytoplasmic-facing; that stretch reads YTIRILLWTFVQSFKALPY. A helical transmembrane segment spans residues 1562-1581; that stretch reads VCLLIAMLFFIYAIIGMQVF. Topologically, residues 1582–1650 are extracellular; the sequence is GNIKLDEESH…NESERCGTDL (69 aa). Asn1641 is a glycosylation site (N-linked (GlcNAc...) asparagine). Residues 1651–1676 form a helical membrane-spanning segment; it reads AYVYFVSFIFFCSFLMLNLFVAVIMD. Over 1677 to 2222 the chain is Cytoplasmic; it reads NFEYLTRDSS…LSDTEEDDKC (546 aa). Residues 1691 to 1726 form the EF-hand domain; that stretch reads HHLDEFVRVWAEYDRAACGRIHYTEMYEMLTLMSPP. 3 residues coordinate Ca(2+): Asp1704, Arg1710, and Glu1715. A disordered region spans residues 1970-2135; sequence SAHRLNSDSG…QQGQHPSPQH (166 aa). Positions 1974–1994 are enriched in basic and acidic residues; that stretch reads LNSDSGHKSDTHRSGGRERGR. Ser2003 and Ser2022 each carry phosphoserine. The segment covering 2010-2027 has biased composition (basic and acidic residues); that stretch reads NSEERGTQADWESPERRQ. Residues 2046-2061 are compositionally biased toward low complexity; sequence SLSESSIPSISDTSTP. Positions 2104–2123 are enriched in polar residues; that stretch reads LASQALESNSACLTESSNSL. Low complexity predominate over residues 2124–2135; it reads HPQQGQHPSPQH.

It belongs to the calcium channel alpha-1 subunit (TC 1.A.1.11) family. CACNA1E subfamily. In terms of assembly, interacts with EFHC1. Voltage-dependent calcium channels are multisubunit complexes, consisting of alpha-1, alpha-2, beta and delta subunits in a 1:1:1:1 ratio. The channel activity is directed by the pore-forming and voltage-sensitive alpha-1 subunit. In many cases, this subunit is sufficient to generate voltage-sensitive calcium channel activity. The auxiliary subunits beta and alpha-2/delta linked by a disulfide bridge regulate the channel activity. Expressed in central nervous system and in insulinoma.

Its subcellular location is the membrane. The enzyme catalyses Ca(2+)(in) = Ca(2+)(out). In terms of biological role, voltage-sensitive calcium channels (VSCC) mediate the entry of calcium ions into excitable cells and are also involved in a variety of calcium-dependent processes, including muscle contraction, hormone or neurotransmitter release, gene expression, cell motility, cell division and cell death. The isoform alpha-1E gives rise to R-type calcium currents. R-type calcium channels belong to the 'high-voltage activated' (HVA) group and are blocked by nickel. They are however insensitive to dihydropyridines (DHP). Calcium channels containing alpha-1E subunit could be involved in the modulation of firing patterns of neurons which is important for information processing. This chain is Voltage-dependent R-type calcium channel subunit alpha-1E (Cacna1e), found in Rattus norvegicus (Rat).